The chain runs to 697 residues: Potassium-transporting ATPase ATP-binding subunit (697 aa).

4 consecutive transmembrane segments (helical) span residues 55–75 (PIMFVVEIGFIITFILSFLPS), 82–102 (GWFNITVSFILLFTVLFANFA), 245–265 (LTFIFLIVVVTLPIFTNYLGF), and 271–291 (VLVALLVCLIPTTIGGLLSAI). Residue aspartate 324 is the 4-aspartylphosphate intermediate of the active site. ATP contacts are provided by residues aspartate 361, glutamate 365, 393–400 (FKAETRMS), and lysine 412. Mg(2+)-binding residues include aspartate 535 and aspartate 539. Helical transmembrane passes span 605–625 (FAIIPAMFTLAIPQMEALNIM), 633–653 (AILSALLFNAVIIPLLIPLAM), and 677–697 (GGVIVPFIGIKVIDMIVGLFI).

Belongs to the cation transport ATPase (P-type) (TC 3.A.3) family. Type IA subfamily. As to quaternary structure, the system is composed of three essential subunits: KdpA, KdpB and KdpC.

The protein resides in the cell membrane. The catalysed reaction is K(+)(out) + ATP + H2O = K(+)(in) + ADP + phosphate + H(+). Its function is as follows. Part of the high-affinity ATP-driven potassium transport (or Kdp) system, which catalyzes the hydrolysis of ATP coupled with the electrogenic transport of potassium into the cytoplasm. This subunit is responsible for energy coupling to the transport system and for the release of the potassium ions to the cytoplasm. The polypeptide is Potassium-transporting ATPase ATP-binding subunit (Bacillus cereus (strain AH187)).